The chain runs to 1137 residues: Morphogenesis-related protein MSB1 (1137 aa).

2 disordered regions span residues 1–59 (MNDM…NSMD) and 483–520 (QLKKKTSAQSPTTEKELPPDDFELEDPPLSKSPTLSQT). Positions 21 to 50 (SNSPKKAQKTNLSPNKNQNNEKNVPRSNGR) are enriched in polar residues. Residue Ser-538 is modified to Phosphoserine. Disordered stretches follow at residues 577-620 (LNNL…EERV), 736-799 (STNT…SDSK), and 814-871 (AVSP…PQFS). The segment covering 593–608 (FEEKSKDAPIREEYHT) has biased composition (basic and acidic residues). Residues 736-749 (STNTNDSCADSSKY) are compositionally biased toward polar residues. The span at 750 to 769 (TADRKLAEPRKISEESKVND) shows a compositional bias: basic and acidic residues. The segment covering 770–796 (DSSSYYSPNINNLPASRMPSQPTYSNS) has biased composition (polar residues). Phosphoserine is present on residues Ser-776 and Ser-816.

May play a role in polarity establishment and bud formation. The MSB1 gene may be functionally redundant. The sequence is that of Morphogenesis-related protein MSB1 (MSB1) from Saccharomyces cerevisiae (strain ATCC 204508 / S288c) (Baker's yeast).